We begin with the raw amino-acid sequence, 137 residues long: 15.7 kDa heat shock protein, peroxisomal (137 aa).

Residues 15 to 134 (QEWSRSTALI…SSKVRNVNIT (120 aa)) form the sHSP domain. The Microbody targeting signal motif lies at 135-137 (SKL).

This sequence belongs to the small heat shock protein (HSP20) family. As to quaternary structure, may form oligomeric structures.

The protein resides in the peroxisome. Its function is as follows. Possesses chaperone activity. The protein is 15.7 kDa heat shock protein, peroxisomal (HSP15.7) of Arabidopsis thaliana (Mouse-ear cress).